The following is a 229-amino-acid chain: 2-C-methyl-D-erythritol 4-phosphate cytidylyltransferase (229 aa).

It belongs to the IspD/TarI cytidylyltransferase family. IspD subfamily.

The enzyme catalyses 2-C-methyl-D-erythritol 4-phosphate + CTP + H(+) = 4-CDP-2-C-methyl-D-erythritol + diphosphate. It participates in isoprenoid biosynthesis; isopentenyl diphosphate biosynthesis via DXP pathway; isopentenyl diphosphate from 1-deoxy-D-xylulose 5-phosphate: step 2/6. Catalyzes the formation of 4-diphosphocytidyl-2-C-methyl-D-erythritol from CTP and 2-C-methyl-D-erythritol 4-phosphate (MEP). This chain is 2-C-methyl-D-erythritol 4-phosphate cytidylyltransferase, found in Clostridium botulinum (strain Langeland / NCTC 10281 / Type F).